The sequence spans 452 residues: Chaperone SurA (452 aa).

The signal sequence occupies residues 1–28; sequence MKKTLRFAAVVSSLAASAALLVAAPAAA. PpiC domains are found at residues 186-288 and 302-400; these read QQDL…RLVD and IVQT…QVLN.

Its subcellular location is the periplasm. The catalysed reaction is [protein]-peptidylproline (omega=180) = [protein]-peptidylproline (omega=0). In terms of biological role, chaperone involved in the correct folding and assembly of outer membrane proteins. Recognizes specific patterns of aromatic residues and the orientation of their side chains, which are found more frequently in integral outer membrane proteins. May act in both early periplasmic and late outer membrane-associated steps of protein maturation. The protein is Chaperone SurA of Burkholderia orbicola (strain AU 1054).